We begin with the raw amino-acid sequence, 104 residues long: Large ribosomal subunit protein uL24 (104 aa).

This sequence belongs to the universal ribosomal protein uL24 family. As to quaternary structure, part of the 50S ribosomal subunit.

In terms of biological role, one of two assembly initiator proteins, it binds directly to the 5'-end of the 23S rRNA, where it nucleates assembly of the 50S subunit. One of the proteins that surrounds the polypeptide exit tunnel on the outside of the subunit. This Ectopseudomonas mendocina (strain ymp) (Pseudomonas mendocina) protein is Large ribosomal subunit protein uL24.